We begin with the raw amino-acid sequence, 100 residues long: Small ribosomal subunit protein uS14 (100 aa).

It belongs to the universal ribosomal protein uS14 family. Part of the 30S ribosomal subunit. Contacts proteins S3 and S10.

In terms of biological role, binds 16S rRNA, required for the assembly of 30S particles and may also be responsible for determining the conformation of the 16S rRNA at the A site. The polypeptide is Small ribosomal subunit protein uS14 (Prochlorococcus marinus (strain MIT 9301)).